Consider the following 394-residue polypeptide: Acetate kinase (394 aa).

Asparagine 7 provides a ligand contact to Mg(2+). Lysine 14 provides a ligand contact to ATP. Arginine 90 is a binding site for substrate. Residue aspartate 147 is the Proton donor/acceptor of the active site. ATP-binding positions include 204–208 (HLGNG), 278–280 (DLR), and 326–330 (GIGEN). Residue glutamate 380 participates in Mg(2+) binding.

It belongs to the acetokinase family. As to quaternary structure, homodimer. It depends on Mg(2+) as a cofactor. The cofactor is Mn(2+).

The protein resides in the cytoplasm. The catalysed reaction is acetate + ATP = acetyl phosphate + ADP. Its pathway is metabolic intermediate biosynthesis; acetyl-CoA biosynthesis; acetyl-CoA from acetate: step 1/2. Its function is as follows. Catalyzes the formation of acetyl phosphate from acetate and ATP. Can also catalyze the reverse reaction. This is Acetate kinase from Flavobacterium johnsoniae (strain ATCC 17061 / DSM 2064 / JCM 8514 / BCRC 14874 / CCUG 350202 / NBRC 14942 / NCIMB 11054 / UW101) (Cytophaga johnsonae).